A 294-amino-acid polypeptide reads, in one-letter code: Tryptophan 2,3-dioxygenase (294 aa).

Residues 63–67, tyrosine 125, and arginine 129 each bind substrate; that span reads FIIQH. Histidine 252 is a binding site for heme. Threonine 266 provides a ligand contact to substrate.

The protein belongs to the tryptophan 2,3-dioxygenase family. As to quaternary structure, homotetramer. Requires heme as cofactor.

It catalyses the reaction L-tryptophan + O2 = N-formyl-L-kynurenine. It functions in the pathway amino-acid degradation; L-tryptophan degradation via kynurenine pathway; L-kynurenine from L-tryptophan: step 1/2. Functionally, heme-dependent dioxygenase that catalyzes the oxidative cleavage of the L-tryptophan (L-Trp) pyrrole ring and converts L-tryptophan to N-formyl-L-kynurenine. Catalyzes the oxidative cleavage of the indole moiety. This is Tryptophan 2,3-dioxygenase from Polaromonas sp. (strain JS666 / ATCC BAA-500).